Reading from the N-terminus, the 131-residue chain is Small ribosomal subunit protein uS8 (131 aa).

It belongs to the universal ribosomal protein uS8 family. As to quaternary structure, part of the 30S ribosomal subunit. Contacts proteins S5 and S12.

Functionally, one of the primary rRNA binding proteins, it binds directly to 16S rRNA central domain where it helps coordinate assembly of the platform of the 30S subunit. This Cupriavidus necator (strain ATCC 17699 / DSM 428 / KCTC 22496 / NCIMB 10442 / H16 / Stanier 337) (Ralstonia eutropha) protein is Small ribosomal subunit protein uS8.